The chain runs to 418 residues: Thyroid hormone receptor alpha (418 aa).

Residues 1-41 form a disordered region; sequence MDQNLSGLDCLSEPDEKRWPDGKRKRKNSQCMGKSGMSGDS. Residues 1-60 form a modulating region; sequence MDQNLSGLDCLSEPDEKRWPDGKRKRKNSQCMGKSGMSGDSSVSLLSAGYIPSYLTKDEP. Residues Cys61, Cys64, Cys78, Cys81, Cys99, Cys105, Cys115, and Cys118 each contribute to the Zn(2+) site. NR C4-type zinc fingers lie at residues 61–81 and 99–123; these read CVVC…CEGC and CKYD…FKKC. Residues 61–135 constitute a DNA-binding region (nuclear receptor); that stretch reads CVVCSDKATG…VGMAMDLVLD (75 aa). One can recognise an NR LBD domain in the interval 171–415; the sequence is EEWELIRIVT…PPLFLEVFED (245 aa). Residues Arg236 and Ser285 each contribute to the 3,3',5-triiodo-L-thyronine site.

Belongs to the nuclear hormone receptor family. NR1 subfamily. As to expression, highest level of expression in erythrocytes. Also expressed in liver, tail, eye, muscle and skin.

The protein resides in the nucleus. In terms of biological role, nuclear hormone receptor that can act as a repressor or activator of transcription. High affinity receptor for thyroid hormones, including triiodothyronine and thyroxine. The chain is Thyroid hormone receptor alpha (thra) from Aquarana catesbeiana (American bullfrog).